The sequence spans 527 residues: Glutamate--cysteine ligase (527 aa).

It belongs to the glutamate--cysteine ligase type 1 family. Type 1 subfamily.

The enzyme catalyses L-cysteine + L-glutamate + ATP = gamma-L-glutamyl-L-cysteine + ADP + phosphate + H(+). It functions in the pathway sulfur metabolism; glutathione biosynthesis; glutathione from L-cysteine and L-glutamate: step 1/2. The sequence is that of Glutamate--cysteine ligase from Bordetella bronchiseptica (strain ATCC BAA-588 / NCTC 13252 / RB50) (Alcaligenes bronchisepticus).